The following is a 124-amino-acid chain: Small polypeptide ROTUNDIFOLIA LIKE 3 (124 aa).

Positions 1–23 are disordered; that stretch reads MEDERWKLSSSKGRSKSGRSCSS. N35 and N38 each carry an N-linked (GlcNAc...) asparagine glycan. Residues 59-75 form a helical membrane-spanning segment; it reads AWSAAGAGGGGASSSSS. A disordered region spans residues 60–95; sequence WSAAGAGGGGASSSSSSQHQHQQQQQQSNNSQRLSK. Low complexity predominate over residues 71–91; it reads SSSSSSQHQHQQQQQQSNNSQ. N-linked (GlcNAc...) asparagine glycosylation is present at N88. The interval 92-124 is required for DVL/RTFL small polypeptide activity; that stretch reads RLSKKCVEAVKEHRARFYIVRRCVSMLVCWRDY.

This sequence belongs to the DVL/RTFL small polypeptides family.

The protein resides in the cell membrane. Small polypeptide acting as a regulatory molecule which coordinates cellular responses required for differentiation, growth and development, probably by restricting polar cell proliferation in lateral organs (e.g. leaves and petioles). The chain is Small polypeptide ROTUNDIFOLIA LIKE 3 from Oryza sativa subsp. japonica (Rice).